Reading from the N-terminus, the 1992-residue chain is Fer-1-like protein 4 (1992 aa).

3 C2 domains span residues 1 to 97 (MALT…VLRE), 214 to 330 (PRGD…QKWA), and 369 to 502 (TSSD…AGFN). At 1–1952 (MALTVCVRHL…PLKTFIFFIW (1952 aa)) the chain is on the extracellular side. Disordered stretches follow at residues 554 to 606 (RVEP…APEI), 661 to 686 (AGRQEEQSGQGSRADEGSESSTLEVQ), and 691 to 710 (SEDRGAGQEEQELLGTPAQW). The span at 559–569 (PSQTTQRSGLS) shows a compositional bias: polar residues. The segment covering 572–581 (TGKKKKKKEK) has biased composition (basic residues). C2 domains follow at residues 951 to 1078 (PSSG…ELQF) and 1126 to 1250 (ISGH…PQEE). 2 disordered regions span residues 1245 to 1276 (EDPQEEEETEEETRDLVPHGPQGEKSLPEAGT) and 1322 to 1361 (FQGQPSSDDEMDEAGDADGTHLISGDREAQEQGETDSKVS). 2 stretches are compositionally biased toward acidic residues: residues 1247–1257 (PQEEEETEEET) and 1328–1337 (SDDEMDEAGD). 2 C2 domains span residues 1430–1549 (SFSE…ANCG) and 1675–1824 (VPAP…EHCS). Ca(2+)-binding residues include Asp-1464, Asp-1470, Asp-1519, Asp-1521, Asp-1527, Asp-1795, Ser-1798, and Asp-1801. The tract at residues 1862 to 1885 (EAREAQAGKKRKRKRRAGRPEDLE) is disordered. The segment covering 1869-1878 (GKKRKRKRRA) has biased composition (basic residues). The helical transmembrane segment at 1953–1973 (RRYWRILVLLLLALITIFLLL) threads the bilayer. The Cytoplasmic segment spans residues 1974–1992 (VFYTIPGQISEVIFSPVHK).

Ca(2+) is required as a cofactor.

The protein localises to the membrane. The protein is Fer-1-like protein 4 (Fer1l4) of Mus musculus (Mouse).